The following is a 698-amino-acid chain: Elongation factor G (698 aa).

Positions 10 to 285 constitute a tr-type G domain; it reads DKTRNIGIMA…AVVDYLPSPL (276 aa). Residues 19–26, 83–87, and 137–140 each bind GTP; these read AHIDAGKT, DTPGH, and NKMD.

This sequence belongs to the TRAFAC class translation factor GTPase superfamily. Classic translation factor GTPase family. EF-G/EF-2 subfamily.

The protein resides in the cytoplasm. In terms of biological role, catalyzes the GTP-dependent ribosomal translocation step during translation elongation. During this step, the ribosome changes from the pre-translocational (PRE) to the post-translocational (POST) state as the newly formed A-site-bound peptidyl-tRNA and P-site-bound deacylated tRNA move to the P and E sites, respectively. Catalyzes the coordinated movement of the two tRNA molecules, the mRNA and conformational changes in the ribosome. This is Elongation factor G from Lactiplantibacillus plantarum (strain ATCC BAA-793 / NCIMB 8826 / WCFS1) (Lactobacillus plantarum).